Consider the following 474-residue polypeptide: tRNA-2-methylthio-N(6)-dimethylallyladenosine synthase (474 aa).

Residues 3–120 (KKLLIKTWGC…LPEMIRQSQS (118 aa)) form the MTTase N-terminal domain. [4Fe-4S] cluster-binding residues include cysteine 12, cysteine 49, cysteine 83, cysteine 157, cysteine 161, and cysteine 164. One can recognise a Radical SAM core domain in the interval 143 to 375 (KAEGATAFVS…QQQVNSQAMR (233 aa)). A TRAM domain is found at 378–441 (RLMLDTEQRV…ANSLRGELVR (64 aa)).

Belongs to the methylthiotransferase family. MiaB subfamily. Monomer. [4Fe-4S] cluster serves as cofactor.

The protein resides in the cytoplasm. It carries out the reaction N(6)-dimethylallyladenosine(37) in tRNA + (sulfur carrier)-SH + AH2 + 2 S-adenosyl-L-methionine = 2-methylsulfanyl-N(6)-dimethylallyladenosine(37) in tRNA + (sulfur carrier)-H + 5'-deoxyadenosine + L-methionine + A + S-adenosyl-L-homocysteine + 2 H(+). In terms of biological role, catalyzes the methylthiolation of N6-(dimethylallyl)adenosine (i(6)A), leading to the formation of 2-methylthio-N6-(dimethylallyl)adenosine (ms(2)i(6)A) at position 37 in tRNAs that read codons beginning with uridine. This is tRNA-2-methylthio-N(6)-dimethylallyladenosine synthase from Aliivibrio fischeri (strain ATCC 700601 / ES114) (Vibrio fischeri).